The chain runs to 208 residues: Anti-sigma-W factor RsiW (208 aa).

Topologically, residues 1–87 (MSCPEQIVQL…ASVKRWFRTH (87 aa)) are cytoplasmic. 4 residues coordinate Zn(2+): Cys3, His30, Cys34, and Cys37. A helical membrane pass occupies residues 88–108 (PVIAAAAVFIILMGGGFFNSW). The Extracellular portion of the chain corresponds to 109–208 (HNDHNFSVSK…LDAFNPNGEE (100 aa)).

This sequence belongs to the zinc-associated anti-sigma factor (ZAS) superfamily. Anti-sigma-W factor family. In terms of assembly, forms a heterodimer with cognate sigma factor SigW, which probably prevents SigW from binding to DNA. Zn(2+) is required as a cofactor. Post-translationally, is processed by successive proteolytic events. First, the extracellular region of RsiW is cleaved by PrsW (site-1 cleavage) in response to cell envelope stresses. In a reconstituted E.coli system PrsW cuts between Ala-168 and Ser-169 followed by trimming by E.coli Tsp; the endogenous extracellular exopeptidase responsible for the event in B.subtilis has not been identified. Next, it undergoes cleavage at an intramembrane site (site-2 cleavage) mediated by RasP. This cleavage uncovers a cryptic proteolytic tag with conserved alanine residues in the transmembrane segment, that is recognized mainly by the ClpXP protease, which completely degrades the protein in the cytoplasm and leads to the induction of the sigma-W-controlled genes.

The protein resides in the cell membrane. The anti-sigma factor for extracytoplasmic function (ECF) sigma factor sigma-W (SigW). Holds SigW, its cognate ECF sigma factor, in an inactive form until released by regulated intramembrane proteolysis (RIP). SigW and RsiW mediate cell response to cell wall stress. RIP occurs when an extracytoplasmic signal triggers a concerted proteolytic cascade to transmit information and elicit cellular responses. The membrane-spanning regulatory substrate protein is first cut periplasmically (site-1 protease, S1P, PrsW), then within the membrane itself (site-2 protease, S2P, RasP), while cytoplasmic proteases finish degrading the anti-sigma factor, liberating sigma-W. This is Anti-sigma-W factor RsiW (rsiW) from Bacillus subtilis (strain 168).